The sequence spans 529 residues: Heat shock protein 60 (529 aa).

Positions 460-484 are disordered; the sequence is YQATVQHPPPQSSYEEDGRRPPTQP.

The chain is Heat shock protein 60 from Giardia intestinalis (Giardia lamblia).